Consider the following 104-residue polypeptide: Large ribosomal subunit protein uL24 (104 aa).

Belongs to the universal ribosomal protein uL24 family. In terms of assembly, part of the 50S ribosomal subunit.

Functionally, one of two assembly initiator proteins, it binds directly to the 5'-end of the 23S rRNA, where it nucleates assembly of the 50S subunit. Its function is as follows. One of the proteins that surrounds the polypeptide exit tunnel on the outside of the subunit. The sequence is that of Large ribosomal subunit protein uL24 from Shewanella halifaxensis (strain HAW-EB4).